Here is a 155-residue protein sequence, read N- to C-terminus: Ribosomal RNA large subunit methyltransferase H (155 aa).

S-adenosyl-L-methionine is bound by residues Leu-72, Gly-103, and 122–127; that span reads LGRMVW.

Belongs to the RNA methyltransferase RlmH family. Homodimer.

The protein resides in the cytoplasm. The catalysed reaction is pseudouridine(1915) in 23S rRNA + S-adenosyl-L-methionine = N(3)-methylpseudouridine(1915) in 23S rRNA + S-adenosyl-L-homocysteine + H(+). Functionally, specifically methylates the pseudouridine at position 1915 (m3Psi1915) in 23S rRNA. In Cereibacter sphaeroides (strain KD131 / KCTC 12085) (Rhodobacter sphaeroides), this protein is Ribosomal RNA large subunit methyltransferase H.